A 706-amino-acid chain; its full sequence is Axin-related protein (706 aa).

An RGS domain is found at 72–191 (SLNLLLDDQD…LQSDICKEYA (120 aa)). 3 disordered regions span residues 278–298 (MTDG…REIH), 400–482 (TPAN…GTSA), and 585–605 (STTL…GFST). Polar residues predominate over residues 402–412 (ANLSPRSQSPF). The span at 453-462 (RSSVSSQLPR) shows a compositional bias: low complexity. Residues 624-706 (GQGLAIVYYF…KIICKVERAC (83 aa)) enclose the DIX domain.

In terms of assembly, interacts with dvl2/dsh via DIX domains in both proteins. Forms a complex with ctnnb1/beta-catenin and gsk3b. Also forms heterodimers with mouse Axin1.

The protein localises to the cytoplasm. It is found in the cytoplasmic vesicle. In terms of biological role, regulates the wnt signaling pathway by interacting with dvl2/dsh, which displaces gsk3b from the axnr-gsk3b complex and thus prevents degradation of ctnnb1/beta-catenin. The chain is Axin-related protein from Xenopus laevis (African clawed frog).